Here is a 330-residue protein sequence, read N- to C-terminus: Zinc finger protein Gfi-1b (330 aa).

An SNAG domain region spans residues 1-20; the sequence is MPRSFLVKSKKAHTYHQPRV. The tract at residues 1 to 42 is disordered; sequence MPRSFLVKSKKAHTYHQPRVQEDEPLWPPALTPVPRDQAPSN. Lys8 is modified (N6,N6-dimethyllysine). Residues 91–330 are interaction with ARIH2; the sequence is GDSPLSDSPP…RHRESQHNLK (240 aa). 6 consecutive C2H2-type zinc fingers follow at residues 163 to 186, 192 to 214, 220 to 242, 248 to 270, 276 to 298, and 304 to 327; these read YHCV…RRSH, FACD…THVH, FECR…LLIH, YPCQ…TYIH, HKCQ…SRKH, and FSCE…ESQH. Residues 164-330 form a mediates interaction with GATA1 region; sequence HCVKCNKVFS…RHRESQHNLK (167 aa).

In terms of assembly, component of a RCOR-GFI-KDM1A-HDAC complex. Interacts directly with RCOR1, KDM1A and HDAC2. Forms a complex with GATA1. Interacts with histone methyltransferases EHMT2 and SUV39H1. Interacts with ARIH2 (via RING-type 2). Interacts with RUNX1T1. Post-translationally, methylation at Lys-8 in the SNAG domain seems required for the recruitment of the corepressor complex. Expressed in bone marrow and fetal liver, but also detectable in fetal spleen, fetal thymus, and testes. Detected in hematopoietic stem cells, erythroblasts, and megakaryocytes. Overexpressed in bone marrow of patients with erythroleukemia and megakaryocytic leukemia as well as in their corresponding leukemic cell lines, and markedly repressed in severe aplastic anemia (SAA).

It is found in the nucleus. Essential proto-oncogenic transcriptional regulator necessary for development and differentiation of erythroid and megakaryocytic lineages. Component of a RCOR-GFI-KDM1A-HDAC complex that suppresses, via histone deacetylase (HDAC) recruitment, a number of genes implicated in multilineage blood cell development and controls hematopoietic differentiation. Transcriptional repressor or activator depending on both promoter and cell type context; represses promoter activity of SOCS1 and SOCS3 and thus, may regulate cytokine signaling pathways. Cooperates with GATA1 to repress target gene transcription, such as the apoptosis regulator BCL2L1; GFI1B silencing in leukemic cell lines markedly increase apoptosis rate. Inhibits down-regulation of MYC and MYB as well as the cyclin-dependent kinase inhibitor CDKN1A/P21WAF1 in IL6-treated myelomonocytic cells. Represses expression of GATA3 in T-cell lymphomas and inhibits GATA1-mediated transcription; as GATA1 also mediates erythroid GFI1B transcription, both GATA1 and GFI1B participate in a feedback regulatory pathway controlling the expression of GFI1B gene in erythroid cells. Suppresses GATA1-mediated stimulation of GFI1B promoter through protein interaction. Binds to gamma-satellite DNA and to its own promoter, auto-repressing its own expression. Alters histone methylation by recruiting histone methyltransferase to target genes promoters. Plays a role in heterochromatin formation. The protein is Zinc finger protein Gfi-1b (GFI1B) of Homo sapiens (Human).